A 443-amino-acid chain; its full sequence is Ribulose bisphosphate carboxylase large chain (443 aa).

K7 is subject to N6,N6,N6-trimethyllysine. The substrate site is built by N116 and T166. Catalysis depends on K168, which acts as the Proton acceptor. Substrate is bound at residue K170. Residues K194, D196, and E197 each coordinate Mg(2+). K194 is subject to N6-carboxylysine. Residue H287 is the Proton acceptor of the active site. The substrate site is built by R288, H320, and S372.

Belongs to the RuBisCO large chain family. Type I subfamily. As to quaternary structure, heterohexadecamer of 8 large chains and 8 small chains; disulfide-linked. The disulfide link is formed within the large subunit homodimers. Requires Mg(2+) as cofactor. The disulfide bond which can form in the large chain dimeric partners within the hexadecamer appears to be associated with oxidative stress and protein turnover.

Its subcellular location is the plastid. It is found in the chloroplast. The catalysed reaction is 2 (2R)-3-phosphoglycerate + 2 H(+) = D-ribulose 1,5-bisphosphate + CO2 + H2O. The enzyme catalyses D-ribulose 1,5-bisphosphate + O2 = 2-phosphoglycolate + (2R)-3-phosphoglycerate + 2 H(+). Its function is as follows. RuBisCO catalyzes two reactions: the carboxylation of D-ribulose 1,5-bisphosphate, the primary event in carbon dioxide fixation, as well as the oxidative fragmentation of the pentose substrate in the photorespiration process. Both reactions occur simultaneously and in competition at the same active site. This Abies sachalinensis (Sakhalin fir) protein is Ribulose bisphosphate carboxylase large chain.